The chain runs to 327 residues: rRNA 2'-O-methyltransferase fibrillarin (327 aa).

Residues 1 to 93 (MKPGFSPRGG…RGNQSGKNVM (93 aa)) form a disordered region. Over residues 7 to 80 (PRGGGFGGRG…GGGRGRGGGR (74 aa)) the composition is skewed to gly residues. Residues R8, R15, R21, R24, R28, and R31 each carry the asymmetric dimethylarginine modification. Residues K90, K108, and K115 each participate in a glycyl lysine isopeptide (Lys-Gly) (interchain with G-Cter in SUMO2) cross-link. K108 is subject to N6-acetyllysine. At S122 the chain carries Phosphoserine. K127 carries the post-translational modification N6-acetyllysine. Phosphoserine occurs at positions 130 and 132. Residues K137, K149, and K164 each participate in a glycyl lysine isopeptide (Lys-Gly) (interchain with G-Cter in SUMO2) cross-link. Residues 178–179 (TT) and 197–198 (EF) contribute to the S-adenosyl-L-methionine site. Residues K211 and K212 each carry the N6-acetyllysine modification. Residues 222–223 (DA) and 242–245 (DVAQ) each bind S-adenosyl-L-methionine.

This sequence belongs to the methyltransferase superfamily. Fibrillarin family. In terms of assembly, component of box C/D small nucleolar ribonucleoprotein (snoRNP) particles that contain SNU13, FBL, NOP5 and NOP56, plus a guide RNA. It is associated with the U3, U8, U13, X and Y small nuclear RNAs. Component of several ribosomal and nucleolar protein complexes. Part of the small subunit (SSU) processome, composed of more than 70 proteins and the RNA chaperone small nucleolar RNA (snoRNA) U3. Interacts with PRMT5 and UTP20. Interacts with DDX5 and C1QBP. Interacts with NOL11. Interacts with PIH1D1. Interacts with RRP1B. Interacts with NOLC1. Interacts with SDE2. Interacts with NOP2 and NOP56. Post-translationally, ubiquitinated. Ubiquitination leads to proteasomal degradation. Deubiquitinated by USP36. In terms of processing, by homology to other fibrillarins, some or all of the N-terminal domain arginines are modified to asymmetric dimethylarginine (DMA). Acetylated by CREBBP/CBP, preventing methylation of 'Gln-105' of histone H2A (H2AQ104me), without affecting rRNA methylation. Deacetylation by SIRT7 restores methylation of 'Gln-105' of histone H2A (H2AQ104me).

The protein localises to the nucleus. Its subcellular location is the nucleolus. It is found in the nucleoplasm. The catalysed reaction is L-glutaminyl-[histone H2A] + S-adenosyl-L-methionine = N(5)-methyl-L-glutaminyl-[histone H2A] + S-adenosyl-L-homocysteine + H(+). It catalyses the reaction a ribonucleotide in rRNA + S-adenosyl-L-methionine = a 2'-O-methylribonucleotide in rRNA + S-adenosyl-L-homocysteine + H(+). The enzyme catalyses a ribonucleotide in U6 snRNA + S-adenosyl-L-methionine = a 2'-O-methylribonucleotide in U6 snRNA + S-adenosyl-L-homocysteine + H(+). In terms of biological role, S-adenosyl-L-methionine-dependent methyltransferase that has the ability to methylate both RNAs and proteins. Involved in pre-rRNA processing by catalyzing the site-specific 2'-hydroxyl methylation of ribose moieties in pre-ribosomal RNA. Site specificity is provided by a guide RNA that base pairs with the substrate. Methylation occurs at a characteristic distance from the sequence involved in base pairing with the guide RNA. Probably catalyzes 2'-O-methylation of U6 snRNAs in box C/D RNP complexes. U6 snRNA 2'-O-methylation is required for mRNA splicing fidelity. Also acts as a protein methyltransferase by mediating methylation of 'Gln-105' of histone H2A (H2AQ104me), a modification that impairs binding of the FACT complex and is specifically present at 35S ribosomal DNA locus. Part of the small subunit (SSU) processome, first precursor of the small eukaryotic ribosomal subunit. During the assembly of the SSU processome in the nucleolus, many ribosome biogenesis factors, an RNA chaperone and ribosomal proteins associate with the nascent pre-rRNA and work in concert to generate RNA folding, modifications, rearrangements and cleavage as well as targeted degradation of pre-ribosomal RNA by the RNA exosome. This chain is rRNA 2'-O-methyltransferase fibrillarin (Fbl), found in Rattus norvegicus (Rat).